Consider the following 825-residue polypeptide: MERYKALEQLLTELDDFLKVLDQENLSSAAVLKKSGLSELLRLYTKSSSSDEEYIYMNKVSVNGEQNSASPDKVPEEQGPLTNGEPSQHSSAPQKSLPDLPPPKMIPERKQPTVPKIESPEGYYEEAEPFDRSINEDGEAVSSSYESYDEDENSKGKAAPYQWPSPEASIELMRDARICAFLWRKKWLGQWAKQLCVIRDTRLLCYKSSKDHSPQLDVNLRGSSVVHKEKQVRKKGHKLKITPMNADVIVLGLQSKDQAEQWLRVIQEVSGLPSEGASEGNQYTPDAQRLNCQKPDIAEKYLSAAEYGITINGHPEIPETKDVKKKCSAGLKLSNLMNLGRKKSTSLEPPERSLETSSYLNVLVNSQWKSRWCFVRDSHLHFYQDRNRSKVAQQPLSLVGCDVLPDPSPDHLYSFRILHNGEELAKLEAKSSEEMGHWLGLLLSESGSKTDPEELTYDYVDAERVSCIVSAAKTSLLLMQRKFSEPNTYIDGLPSRDCQDDLYDDVEVSELIAVVEPAEEAAPAVDANSGSEPDRVYLDLTPVKSFLHSSSEAQAQASLPAVPHQDDVAETLTVDPKPGTTPEEPHTESPGDPEVQQRQPEVQESSEPIEPTPRITMVKLQAEQQRISFPANCPDTMASAPIAASPPVKEKLRVTSAEIKLGKNRTEAEVKRYTEEKERLERSKEEIRGHLAQLRREKRELKETLLRCTDKGVLAKLEQTLKKIDEECRMEESRRVDLELSIMEVKDNLKKAEAGPVTLGTTVDTTHLDNMSPRPQPKAATPNPPPDSTPVNSASVLKNRPLSVMVTGKGTVLQKAKEWEKKGAS.

At Tyr-56 the chain carries Phosphotyrosine. A disordered region spans residues 62-163; that stretch reads VNGEQNSASP…SKGKAAPYQW (102 aa). Residues 80–94 show a composition bias toward polar residues; that stretch reads PLTNGEPSQHSSAPQ. Thr-113 is modified (phosphothreonine). 2 consecutive PH domains span residues 175-271 and 353-447; these read DARI…EVSG and SLET…SESG. Ser-408 carries the post-translational modification Phosphoserine. Tyr-413 bears the Phosphotyrosine mark. Phosphoserine is present on Ser-484. The segment at 571 to 614 is disordered; it reads TLTVDPKPGTTPEEPHTESPGDPEVQQRQPEVQESSEPIEPTPR. Residues 593–608 are compositionally biased toward low complexity; it reads PEVQQRQPEVQESSEP. Residues 657-754 are a coiled coil; that stretch reads AEIKLGKNRT…VKDNLKKAEA (98 aa). The segment at 757–801 is disordered; sequence VTLGTTVDTTHLDNMSPRPQPKAATPNPPPDSTPVNSASVLKNRP. A compositionally biased stretch (polar residues) spans 759–769; that stretch reads LGTTVDTTHLD.

Interacts with SRC. Interacts with LCK when tyrosine phosphorylated. Post-translationally, tyrosine phosphorylated (by SRC).

Its subcellular location is the cytoplasm. Its function is as follows. May play a role in a signaling cascade by enhancing the kinase activity of SRC. Contributes to SRC-regulated transcription activation. This is Actin filament-associated protein 1-like 2 (Afap1l2) from Mus musculus (Mouse).